Consider the following 259-residue polypeptide: 3-deoxy-manno-octulosonate cytidylyltransferase (259 aa).

Belongs to the KdsB family.

It is found in the cytoplasm. The enzyme catalyses 3-deoxy-alpha-D-manno-oct-2-ulosonate + CTP = CMP-3-deoxy-beta-D-manno-octulosonate + diphosphate. It functions in the pathway nucleotide-sugar biosynthesis; CMP-3-deoxy-D-manno-octulosonate biosynthesis; CMP-3-deoxy-D-manno-octulosonate from 3-deoxy-D-manno-octulosonate and CTP: step 1/1. Its pathway is bacterial outer membrane biogenesis; lipopolysaccharide biosynthesis. In terms of biological role, activates KDO (a required 8-carbon sugar) for incorporation into bacterial lipopolysaccharide in Gram-negative bacteria. In Actinobacillus succinogenes (strain ATCC 55618 / DSM 22257 / CCUG 43843 / 130Z), this protein is 3-deoxy-manno-octulosonate cytidylyltransferase.